The primary structure comprises 598 residues: Arginine--tRNA ligase (598 aa).

Positions Ala-131–His-141 match the 'HIGH' region motif. A disordered region spans residues Lys-288–Gly-309.

It belongs to the class-I aminoacyl-tRNA synthetase family. In terms of assembly, monomer.

The protein resides in the cytoplasm. The enzyme catalyses tRNA(Arg) + L-arginine + ATP = L-arginyl-tRNA(Arg) + AMP + diphosphate. The protein is Arginine--tRNA ligase of Anaeromyxobacter dehalogenans (strain 2CP-C).